We begin with the raw amino-acid sequence, 523 residues long: 11-oxo-beta-amyrin 30-oxidase (523 aa).

Residues 9-29 (AIWVVLTVILAAIPIWVCHMV) form a helical membrane-spanning segment. Cys-471 is a binding site for heme.

The protein belongs to the cytochrome P450 family. It depends on heme as a cofactor. Expressed in roots, stolons and stems. Not detected in leaves.

The protein localises to the membrane. The catalysed reaction is 11-oxo-beta-amyrin + 3 reduced [NADPH--hemoprotein reductase] + 3 O2 = glycyrrhetinate + 3 oxidized [NADPH--hemoprotein reductase] + 4 H2O + 4 H(+). It carries out the reaction 11-oxo-beta-amyrin + reduced [NADPH--hemoprotein reductase] + O2 = 30-hydroxy-11-oxo-beta-amyrin + oxidized [NADPH--hemoprotein reductase] + H2O + H(+). The enzyme catalyses 30-hydroxy-11-oxo-beta-amyrin + reduced [NADPH--hemoprotein reductase] + O2 = glycyrrhetaldehyde + oxidized [NADPH--hemoprotein reductase] + 2 H2O + H(+). It catalyses the reaction glycyrrhetaldehyde + reduced [NADPH--hemoprotein reductase] + O2 = glycyrrhetinate + oxidized [NADPH--hemoprotein reductase] + H2O + 2 H(+). Functionally, involved in the biosynthesis of Glycyrrhetinic acid (GA), a natural product which exhibits anti-inflammatory activity. Involved in the biosynthesis of the triterpenoid saponin glycyrrhizin. Catalyzes three sequential oxidation steps at C-30 of 11-oxo-beta-amyrin. Also able to catalyze C-30 monohydroxylation of beta-amyrin to produce 30-hydroxy-beta-amyrin. May be also responsible for the oxidation at positions C-22 and C-29 in addition to C-30. In Glycyrrhiza uralensis (Chinese licorice), this protein is 11-oxo-beta-amyrin 30-oxidase.